A 254-amino-acid polypeptide reads, in one-letter code: Pyridoxine 5'-phosphate synthase (254 aa).

Residue asparagine 12 coordinates 3-amino-2-oxopropyl phosphate. A 1-deoxy-D-xylulose 5-phosphate-binding site is contributed by 14-15; that stretch reads DH. Residue arginine 23 coordinates 3-amino-2-oxopropyl phosphate. Histidine 48 serves as the catalytic Proton acceptor. 1-deoxy-D-xylulose 5-phosphate-binding residues include arginine 50 and histidine 55. Glutamate 75 serves as the catalytic Proton acceptor. Threonine 105 is a 1-deoxy-D-xylulose 5-phosphate binding site. Histidine 199 (proton donor) is an active-site residue. 3-amino-2-oxopropyl phosphate is bound by residues glycine 200 and 221–222; that span reads GF.

It belongs to the PNP synthase family. As to quaternary structure, homooctamer; tetramer of dimers.

Its subcellular location is the cytoplasm. The enzyme catalyses 3-amino-2-oxopropyl phosphate + 1-deoxy-D-xylulose 5-phosphate = pyridoxine 5'-phosphate + phosphate + 2 H2O + H(+). It participates in cofactor biosynthesis; pyridoxine 5'-phosphate biosynthesis; pyridoxine 5'-phosphate from D-erythrose 4-phosphate: step 5/5. In terms of biological role, catalyzes the complicated ring closure reaction between the two acyclic compounds 1-deoxy-D-xylulose-5-phosphate (DXP) and 3-amino-2-oxopropyl phosphate (1-amino-acetone-3-phosphate or AAP) to form pyridoxine 5'-phosphate (PNP) and inorganic phosphate. This Rhodopseudomonas palustris (strain ATCC BAA-98 / CGA009) protein is Pyridoxine 5'-phosphate synthase.